Consider the following 177-residue polypeptide: Nucleoside triphosphate/diphosphate phosphatase (177 aa).

The Proton donor role is filled by Arg-23. Asn-87, Asp-103, Asp-105, Asp-107, Asp-120, and Glu-123 together coordinate Mg(2+).

The protein belongs to the Ntdp family. It depends on Mg(2+) as a cofactor.

The catalysed reaction is a ribonucleoside 5'-triphosphate + H2O = a ribonucleoside 5'-diphosphate + phosphate + H(+). It catalyses the reaction a ribonucleoside 5'-diphosphate + H2O = a ribonucleoside 5'-phosphate + phosphate + H(+). Its function is as follows. Has nucleoside phosphatase activity towards nucleoside triphosphates and nucleoside diphosphates. In Streptococcus pneumoniae serotype 19F (strain G54), this protein is Nucleoside triphosphate/diphosphate phosphatase.